The chain runs to 1755 residues: E3 ubiquitin-protein ligase UBR2 (1755 aa).

N-acetylalanine is present on Ala-2. Lys-94 participates in a covalent cross-link: Glycyl lysine isopeptide (Lys-Gly) (interchain with G-Cter in ubiquitin). The UBR-type zinc finger occupies 97–168 (HLCGRVFKVG…EGPYCQKHEL (72 aa)). The Zn(2+) site is built by Cys-99, Cys-112, Cys-115, Cys-124, Cys-127, His-133, and His-136. Residue Phe-148 participates in a peptide binding. Zn(2+) is bound at residue Cys-149. Asp-150 is a binding site for a peptide. A Zn(2+)-binding site is contributed by Cys-151. Asp-153 serves as a coordination point for a peptide. A Glycyl lysine isopeptide (Lys-Gly) (interchain with G-Cter in ubiquitin) cross-link involves residue Lys-158. Cys-163 is a binding site for Zn(2+). Lys-165 participates in a covalent cross-link: Glycyl lysine isopeptide (Lys-Gly) (interchain with G-Cter in ubiquitin). A Zn(2+)-binding site is contributed by His-166. Residues Lys-248, Lys-255, and Lys-470 each participate in a glycyl lysine isopeptide (Lys-Gly) (interchain with G-Cter in ubiquitin) cross-link. Position 476 is a phosphoserine (Ser-476). Glycyl lysine isopeptide (Lys-Gly) (interchain with G-Cter in ubiquitin) cross-links involve residues Lys-488, Lys-568, Lys-779, and Lys-789. The disordered stretch occupies residues 1004–1034 (ESSPTSPVAETEGTIMEESSRDKDKAERKRK). Residues 1019 to 1054 (MEESSRDKDKAERKRKAEIARLRREKIMAQMSEMQR) adopt a coiled-coil conformation. Residues 1021–1034 (ESSRDKDKAERKRK) are compositionally biased toward basic and acidic residues. Zn(2+) is bound by residues Cys-1108, Cys-1111, Cys-1168, His-1170, His-1173, Cys-1176, Cys-1210, and Cys-1213. An RING-type; atypical zinc finger spans residues 1108–1214 (CILCQEEQEV…NGEFLCPLCE (107 aa)). The tract at residues 1261-1287 (RKEESTPNNASTKNSENVDELQLPEGF) is disordered. Polar residues predominate over residues 1266 to 1275 (TPNNASTKNS). Residues Lys-1496, Lys-1599, and Lys-1689 each participate in a glycyl lysine isopeptide (Lys-Gly) (interchain with G-Cter in ubiquitin) cross-link. Ser-1694 carries the phosphoserine modification. Tyr-1697 is modified (phosphotyrosine).

It belongs to the E3 ubiquitin-protein ligase UBR1-like family. In terms of assembly, interacts with UBE2B; promotes the UBE2B-H2A interaction and the ubiquitination of histone H2A by UBE2B and UBR2. Interacts with RECQL4. Interacts with TEX19; does not lead to TEX19 degradation and stabilizes it. Interacts with CASP8. Interacts with ATXN3. Interacts with UBE2O. Dephosphorylated by DUSP22 at Ser-1694 and Tyr-1697, leading to subsequent ubiquitination and proteasomal degradation. Post-translationally, 'Lys-48'-linked ubiquitinated at Lys-94, Lys-779 and Lys-1599 following DUSP22-mediated dephosphorylation of Ser-1694 and Tyr-1697 which promotes UBR2 interaction with the SCF(FBW1A) E3 ubiquitin-protein ligase complex. As to expression, broadly expressed, with highest levels in skeletal muscle, kidney and pancreas. Present in acinar cells of the pancreas (at protein level).

Its subcellular location is the nucleus. It is found in the chromosome. It catalyses the reaction S-ubiquitinyl-[E2 ubiquitin-conjugating enzyme]-L-cysteine + [acceptor protein]-L-lysine = [E2 ubiquitin-conjugating enzyme]-L-cysteine + N(6)-ubiquitinyl-[acceptor protein]-L-lysine.. It functions in the pathway protein modification; protein ubiquitination. Its function is as follows. E3 ubiquitin-protein ligase which is a component of the N-end rule pathway. Recognizes and binds to proteins bearing specific N-terminal residues (N-degrons) that are destabilizing according to the N-end rule, leading to their ubiquitination and subsequent degradation. Recognizes both type-1 and type-2 N-degrons, containing positively charged amino acids (Arg, Lys and His) and bulky and hydrophobic amino acids, respectively. Does not ubiquitinate proteins that are acetylated at the N-terminus. In contrast, it strongly binds methylated N-degrons. Plays a critical role in chromatin inactivation and chromosome-wide transcriptional silencing during meiosis via ubiquitination of histone H2A. Binds leucine and is a negative regulator of the leucine-mTOR signaling pathway, thereby controlling cell growth. Required for spermatogenesis, promotes, with Tex19.1, SPO11-dependent recombination foci to accumulate and drive robust homologous chromosome synapsis. Polyubiquitinates LINE-1 retrotransposon encoded, LIRE1, which induces degradation, inhibiting LINE-1 retrotransposon mobilization. Catalyzes ubiquitination and degradation of the N-terminal part of NLRP1 following NLRP1 activation by pathogens and other damage-associated signals: ubiquitination promotes degradation of the N-terminal part and subsequent release of the cleaved C-terminal part of NLRP1, which polymerizes and forms the NLRP1 inflammasome followed by host cell pyroptosis. Plays a role in T-cell receptor signaling by inducing 'Lys-63'-linked ubiquitination of lymphocyte cell-specific kinase LCK. This activity is regulated by DUSP22, which induces 'Lys-48'-linked ubiquitination of UBR2, leading to its proteasomal degradation by SCF E3 ubiquitin-protein ligase complex. This chain is E3 ubiquitin-protein ligase UBR2 (UBR2), found in Homo sapiens (Human).